We begin with the raw amino-acid sequence, 179 residues long: Hypoxanthine-guanine phosphoribosyltransferase (179 aa).

Diphosphate-binding residues include Lys-42 and Gly-43. 2 residues coordinate Mg(2+): Glu-98 and Asp-99. Residue Glu-102 is the Proton acceptor of the active site. Residues Lys-130, 151–152 (FV), and Asp-158 each bind GMP. Arg-164 serves as a coordination point for diphosphate.

Belongs to the purine/pyrimidine phosphoribosyltransferase family. Requires Mg(2+) as cofactor.

The protein resides in the cytoplasm. It carries out the reaction IMP + diphosphate = hypoxanthine + 5-phospho-alpha-D-ribose 1-diphosphate. The enzyme catalyses GMP + diphosphate = guanine + 5-phospho-alpha-D-ribose 1-diphosphate. It functions in the pathway purine metabolism; IMP biosynthesis via salvage pathway; IMP from hypoxanthine: step 1/1. Its pathway is purine metabolism; GMP biosynthesis via salvage pathway; GMP from guanine: step 1/1. In terms of biological role, purine salvage pathway enzyme that catalyzes the transfer of the ribosyl-5-phosphate group from 5-phospho-alpha-D-ribose 1-diphosphate (PRPP) to the N9 position of the 6-oxopurines hypoxanthine and guanine to form the corresponding ribonucleotides IMP (inosine 5'-monophosphate) and GMP (guanosine 5'-monophosphate), with the release of PPi. The sequence is that of Hypoxanthine-guanine phosphoribosyltransferase (hpt) from Staphylococcus epidermidis (strain ATCC 35984 / DSM 28319 / BCRC 17069 / CCUG 31568 / BM 3577 / RP62A).